We begin with the raw amino-acid sequence, 264 residues long: SPARC (264 aa).

The signal sequence occupies residues 1 to 16 (MRYALAACLLLLAASS). Positions 52–74 (PCEDHQCGWGKECVVGKKGEPTC) constitute a Follistatin-like domain. Cystine bridges form between cysteine 53-cysteine 64, cysteine 58-cysteine 74, cysteine 76-cysteine 110, cysteine 80-cysteine 103, cysteine 92-cysteine 135, cysteine 141-cysteine 228, and cysteine 236-cysteine 252. A Kazal-like domain is found at 68–137 (KKGEPTCECI…HLEYLGECKK (70 aa)). N-linked (GlcNAc...) asparagine glycosylation occurs at asparagine 96. The EF-hand domain maps to 224-259 (PMESCIKPFLEGCDANNDGNISIKEWGKCLGLKEGE). Ca(2+) is bound by residues aspartate 237, asparagine 239, aspartate 241, asparagine 243, and glutamate 248. Residue asparagine 243 is glycosylated (N-linked (GlcNAc...) asparagine).

The protein belongs to the SPARC family. In terms of tissue distribution, expressed by body wall and sex muscle cells. Probable association with basement membranes.

The protein localises to the secreted. It is found in the extracellular space. Its subcellular location is the extracellular matrix. The protein resides in the basement membrane. In terms of biological role, has a high affinity for collagen. Affects nematode body morphology and mobility. Essential for C.elegans development and muscle function. The cysteine-rich region could have protease inhibitory activity or may provide the framework for a protein binding module. Probable role in skeletal morphogenesis. This chain is SPARC (ost-1), found in Caenorhabditis elegans.